A 928-amino-acid chain; its full sequence is MRVKDTLNLGKTKFKMRGNLPVREAEWQKEWEENKLYEQRLKLNEGKPRFDLHDGPPFANGNIHMGHSLNKISKDIIVRFKNMNGYYAPYVPGWDTHGLPVEQQLAKKGVDRKTMDRAKYRELCRQFAEEQVQKQMADFKRLGVMADWDHPYITLQPKFEAEEIRVFGEMFKKGYIYKGKKPVYWSWSSESTLAEAEVEYHDIKSPRIYVAFPIKDGKGILDSDTSLVIWTTTPWTIPSNVGITVNPKFDYSVVEVNGKKYVIGSQRLSAVAEDLGWEDYKVVKTLKGTDFDRMTYQHPLYDVTGVIMNDTYVTADDGTGLVHNATGFGEDDYNVGRRYGLPVFSPMDAQGRFTKEVPDPDLVGMFYDDANKVVADKLEKAGALLKLSFFTHSYPHDWRTKKPVIYRATTQWFASIDKFRDQILAEIEKANFIPAWGKTRLYNMIKDRGDWVISRQRAWGVPLPIFYAEDDTPIVTPETIEHVAQIFEKEGSNAWYTYTAEELLPEGFKSEHSPNGKFRKETDILDVWFDSGSSWAGVMQERDGLGFPADLYLEGSDQYRGWFNSSLITSVAVTGKAPYKQVLSQGFVLDDKGHKMSKSLGNVISPNDVIKQMGAEIIRLWVAGADTTSDVAVSQDILRQSAESYRKIRNTMRFMLANTSDFDPKEDAIAYPDMSGVDQYMEIKLNRLIEEAIEAYNKFDFNSVYKKVFSFISNDLSAFYLDFAKDILYIDAEDSETRRSMQTVIYDVLVKLTKLMTPILPHTMEEVWGYLKEPEDYVQLANMPEVDHFANEDEVLADWNAFMKVRSDVLKALEKARNAKVIGKSFEAHVTLYPTEETKALLDKLNANIRQILIVSDLTISDEEAPENAEKLPTASIVVEHAAGEVCPRCRRTTTDVGSDPRFPELCARCAAIVAENFPEAEKEGLEK.

Residues 57-67 carry the 'HIGH' region motif; it reads PFANGNIHMGH. E554 provides a ligand contact to L-isoleucyl-5'-AMP. The short motif at 595–599 is the 'KMSKS' region element; the sequence is KMSKS. Residue K598 coordinates ATP. C887, C890, C907, and C910 together coordinate Zn(2+).

This sequence belongs to the class-I aminoacyl-tRNA synthetase family. IleS type 1 subfamily. As to quaternary structure, monomer. Zn(2+) is required as a cofactor.

It is found in the cytoplasm. The enzyme catalyses tRNA(Ile) + L-isoleucine + ATP = L-isoleucyl-tRNA(Ile) + AMP + diphosphate. Functionally, catalyzes the attachment of isoleucine to tRNA(Ile). As IleRS can inadvertently accommodate and process structurally similar amino acids such as valine, to avoid such errors it has two additional distinct tRNA(Ile)-dependent editing activities. One activity is designated as 'pretransfer' editing and involves the hydrolysis of activated Val-AMP. The other activity is designated 'posttransfer' editing and involves deacylation of mischarged Val-tRNA(Ile). The sequence is that of Isoleucine--tRNA ligase from Lactobacillus johnsonii (strain CNCM I-12250 / La1 / NCC 533).